Reading from the N-terminus, the 266-residue chain is Putative carbamate hydrolase RutD (266 aa).

This sequence belongs to the AB hydrolase superfamily. Hydrolase RutD family.

It catalyses the reaction carbamate + 2 H(+) = NH4(+) + CO2. Involved in pyrimidine catabolism. May facilitate the hydrolysis of carbamate, a reaction that can also occur spontaneously. In Escherichia coli O26:H11 (strain 11368 / EHEC), this protein is Putative carbamate hydrolase RutD.